Consider the following 405-residue polypeptide: Phosphoglycerate kinase (405 aa).

Substrate-binding positions include 21–23 (DFN), arginine 36, 59–62 (HLGR), arginine 119, and arginine 161. ATP is bound by residues lysine 212, glycine 301, glutamate 332, and 361–364 (GGDS).

Belongs to the phosphoglycerate kinase family. Monomer.

Its subcellular location is the cytoplasm. It carries out the reaction (2R)-3-phosphoglycerate + ATP = (2R)-3-phospho-glyceroyl phosphate + ADP. It participates in carbohydrate degradation; glycolysis; pyruvate from D-glyceraldehyde 3-phosphate: step 2/5. The protein is Phosphoglycerate kinase of Leuconostoc citreum (strain KM20).